We begin with the raw amino-acid sequence, 338 residues long: Thiosulfate-binding protein (338 aa).

An N-terminal signal peptide occupies residues 1–25 (MAVNLLKKNSLALVASLLLAGHVQA).

It belongs to the prokaryotic sulfate-binding protein family. The complex is composed of two ATP-binding proteins (CysA), two transmembrane proteins (CysT and CysW) and a solute-binding protein (CysP).

It is found in the periplasm. Part of the ABC transporter complex CysAWTP (TC 3.A.1.6.1) involved in sulfate/thiosulfate import. This protein specifically binds thiosulfate and is involved in its transmembrane transport. The polypeptide is Thiosulfate-binding protein (cysP) (Escherichia coli (strain K12)).